Here is a 181-residue protein sequence, read N- to C-terminus: Putative ankyrin repeat protein RF_0782 (181 aa).

2 ANK repeats span residues 24–53 and 54–83; these read YHYS…DINF and GSTP…NTQI.

This chain is Putative ankyrin repeat protein RF_0782, found in Rickettsia felis (strain ATCC VR-1525 / URRWXCal2) (Rickettsia azadi).